The primary structure comprises 580 residues: Mitogen-activated protein kinase 12 (580 aa).

The tract at residues 18-38 (RTASGSNQSSNAGEEAASSDL) is disordered. The span at 20–29 (ASGSNQSSNA) shows a compositional bias: polar residues. One can recognise a Protein kinase domain in the interval 87-378 (YQIQEVIGKG…AEEALADPYF (292 aa)). ATP is bound by residues 93–101 (IGKGSYGVV) and K116. Residue D213 is the Proton acceptor of the active site. T249 is modified (phosphothreonine). The short motif at 249–251 (TDY) is the TXY element. A Phosphotyrosine modification is found at Y251. A required for kinase activity and nuclear localization region spans residues 325–506 (ARRYLSTMRK…SADSVARTTV (182 aa)). The disordered stretch occupies residues 458-580 (YSKGERGSPL…LSEQVSRMHS (123 aa)). Polar residues predominate over residues 502–543 (ARTTVSPPMSQDAQQHGSAGQNGVTSTDLSSRSYLKSASISA). The segment covering 554–566 (EPEDDYISEEMEG) has biased composition (acidic residues).

The protein belongs to the protein kinase superfamily. CMGC Ser/Thr protein kinase family. MAP kinase subfamily. As to quaternary structure, interacts with EREBP1. In terms of processing, dually phosphorylated on Thr-249 and Tyr-251, which activates the enzyme. Phosphorylated on tyrosine residue.

Its subcellular location is the cytoplasm. The protein resides in the nucleus. It catalyses the reaction L-seryl-[protein] + ATP = O-phospho-L-seryl-[protein] + ADP + H(+). It carries out the reaction L-threonyl-[protein] + ATP = O-phospho-L-threonyl-[protein] + ADP + H(+). Activated by threonine and tyrosine phosphorylation. Activated in response to hydrogen peroxide, salicylic acid, jasmonic acid, ethylene, fungal elicitor and infection with rice blast fungus (M.grisea). In terms of biological role, may be involved in defense signaling pathway. Phosphorylates EREBP1 transcriptional activator in vitro. Enhances DNA-binding activity of EREBP1 to the GCC box element of pathogenesis-related (PR) gene promoters. This chain is Mitogen-activated protein kinase 12 (MPK12), found in Oryza sativa subsp. japonica (Rice).